The sequence spans 81 residues: Ferredoxin (81 aa).

Residues 2-30 enclose the 4Fe-4S ferredoxin-type domain; sequence KYTIVDKETCIACGACGAAAPDIYDYDED. C11, C14, C17, and C61 together coordinate [4Fe-4S] cluster.

It depends on [4Fe-4S] cluster as a cofactor.

In terms of biological role, ferredoxins are iron-sulfur proteins that transfer electrons in a wide variety of metabolic reactions. In Geobacillus stearothermophilus (Bacillus stearothermophilus), this protein is Ferredoxin (fer).